The primary structure comprises 41 residues: Large ribosomal subunit protein bL36 (41 aa).

This sequence belongs to the bacterial ribosomal protein bL36 family.

The protein is Large ribosomal subunit protein bL36 of Rickettsia prowazekii (strain Madrid E).